The primary structure comprises 122 residues: MNKIIKFHNERIKWLWILTAILAISFFVICFNNVKWIYTENTAKYELLTSSLEKIVKFYSFSLVDKPFARGVPNSIDVFSRAIIGVAFGLGFVGTMLIDYFIISKVAYIVKQKIKQSKKVGM.

2 helical membrane-spanning segments follow: residues Trp-14 to Val-34 and Ile-83 to Ile-103.

The protein resides in the cell membrane. This is an uncharacterized protein from Ureaplasma parvum serovar 3 (strain ATCC 700970).